Reading from the N-terminus, the 655-residue chain is p-hydroxybenzoic acid efflux pump subunit AaeB (655 aa).

The next 11 helical transmembrane spans lie at Phe-13–Leu-33, Trp-38–Pro-58, Leu-69–Ile-89, Leu-93–Val-113, Trp-121–Leu-141, Glu-152–Ile-172, Leu-370–Val-390, Phe-407–Pro-427, Gln-431–Val-451, Met-459–Phe-479, and Phe-482–Leu-502.

The protein belongs to the aromatic acid exporter ArAE (TC 2.A.85) family.

The protein localises to the cell inner membrane. Functionally, forms an efflux pump with AaeA. Could function as a metabolic relief valve, allowing to eliminate certain compounds when they accumulate to high levels in the cell. The chain is p-hydroxybenzoic acid efflux pump subunit AaeB from Shigella sonnei (strain Ss046).